The sequence spans 214 residues: Phosphatidylserine decarboxylase proenzyme (214 aa).

Ser-182 acts as the Schiff-base intermediate with substrate; via pyruvic acid in catalysis. Residue Ser-182 is modified to Pyruvic acid (Ser); by autocatalysis.

This sequence belongs to the phosphatidylserine decarboxylase family. PSD-A subfamily. As to quaternary structure, heterodimer of a large membrane-associated beta subunit and a small pyruvoyl-containing alpha subunit. Pyruvate serves as cofactor. Post-translationally, is synthesized initially as an inactive proenzyme. Formation of the active enzyme involves a self-maturation process in which the active site pyruvoyl group is generated from an internal serine residue via an autocatalytic post-translational modification. Two non-identical subunits are generated from the proenzyme in this reaction, and the pyruvate is formed at the N-terminus of the alpha chain, which is derived from the carboxyl end of the proenzyme. The post-translation cleavage follows an unusual pathway, termed non-hydrolytic serinolysis, in which the side chain hydroxyl group of the serine supplies its oxygen atom to form the C-terminus of the beta chain, while the remainder of the serine residue undergoes an oxidative deamination to produce ammonia and the pyruvoyl prosthetic group on the alpha chain.

Its subcellular location is the cell membrane. The enzyme catalyses a 1,2-diacyl-sn-glycero-3-phospho-L-serine + H(+) = a 1,2-diacyl-sn-glycero-3-phosphoethanolamine + CO2. Its pathway is phospholipid metabolism; phosphatidylethanolamine biosynthesis; phosphatidylethanolamine from CDP-diacylglycerol: step 2/2. Functionally, catalyzes the formation of phosphatidylethanolamine (PtdEtn) from phosphatidylserine (PtdSer). This chain is Phosphatidylserine decarboxylase proenzyme, found in Solidesulfovibrio magneticus (strain ATCC 700980 / DSM 13731 / RS-1) (Desulfovibrio magneticus).